Reading from the N-terminus, the 208-residue chain is Small ribosomal subunit protein uS4A (208 aa).

One can recognise an S4 RNA-binding domain in the interval 98 to 161 (LRLDNVVFRM…RKVLRISEAL (64 aa)).

This sequence belongs to the universal ribosomal protein uS4 family. As to quaternary structure, part of the 30S ribosomal subunit. Contacts protein S5. The interaction surface between S4 and S5 is involved in control of translational fidelity.

In terms of biological role, one of the primary rRNA binding proteins, it binds directly to 16S rRNA where it nucleates assembly of the body of the 30S subunit. With S5 and S12 plays an important role in translational accuracy. This Myxococcus xanthus (strain DK1622) protein is Small ribosomal subunit protein uS4A.